The chain runs to 538 residues: Phosphoenolpyruvate carboxykinase (ATP) (538 aa).

Positions 64, 205, and 211 each coordinate substrate. ATP is bound by residues Lys-211, His-230, and 246–254; that span reads GLSGTGKTT. Residues Lys-211 and His-230 each contribute to the Mn(2+) site. Asp-267 is a binding site for Mn(2+). ATP is bound by residues Glu-295, Arg-331, 447–448, and Thr-453; that span reads RI. Arg-331 contributes to the substrate binding site.

This sequence belongs to the phosphoenolpyruvate carboxykinase (ATP) family. In terms of assembly, monomer. Requires Mn(2+) as cofactor.

It localises to the cytoplasm. The enzyme catalyses oxaloacetate + ATP = phosphoenolpyruvate + ADP + CO2. Its pathway is carbohydrate biosynthesis; gluconeogenesis. Its function is as follows. Involved in the gluconeogenesis. Catalyzes the conversion of oxaloacetate (OAA) to phosphoenolpyruvate (PEP) through direct phosphoryl transfer between the nucleoside triphosphate and OAA. In Haemophilus influenzae (strain 86-028NP), this protein is Phosphoenolpyruvate carboxykinase (ATP).